Consider the following 872-residue polypeptide: DNA mismatch repair protein MutS (872 aa).

632–639 contributes to the ATP binding site; it reads GPNMGGKS.

Belongs to the DNA mismatch repair MutS family.

In terms of biological role, this protein is involved in the repair of mismatches in DNA. It is possible that it carries out the mismatch recognition step. This protein has a weak ATPase activity. This is DNA mismatch repair protein MutS from Colwellia psychrerythraea (strain 34H / ATCC BAA-681) (Vibrio psychroerythus).